The primary structure comprises 468 residues: Nicotinamide phosphoribosyltransferase (468 aa).

Residue Arg180 coordinates diphosphate. Position 203 (Asp203) interacts with beta-nicotinamide D-ribonucleotide. The diphosphate site is built by His229 and Arg293. Phosphohistidine; by autocatalysis is present on His229. Positions 335 and 373 each coordinate beta-nicotinamide D-ribonucleotide.

Belongs to the NAPRTase family. Homodimer. The dimeric structure consists of two protomers arranged head to tail, with domain A on one protomer interacting with domain B on the other protomer. Phosphorylation at His-229 plays a crucial role in enhancing the substrate affinity and is important for maintaining enzymatic activity.

It carries out the reaction beta-nicotinamide D-ribonucleotide + diphosphate = 5-phospho-alpha-D-ribose 1-diphosphate + nicotinamide + H(+). It functions in the pathway cofactor biosynthesis; NAD(+) biosynthesis; nicotinamide D-ribonucleotide from 5-phospho-alpha-D-ribose 1-diphosphate and nicotinamide: step 1/1. Its activity is regulated as follows. ATP-dependent autophosphorylation plays a vital role in nicotinamide binding and enzyme activation. Activity is inhibited by FK866. In terms of biological role, catalyzes the condensation of nicotinamide with 5-phosphoribosyl-1-pyrophosphate to yield nicotinamide mononucleotide, an intermediate in the biosynthesis of NAD. Plays an important role in the biosynthesis of NAD via the nicotinamide (NAM) salvage pathway. Is also capable of hydrolyzing ATP and shows ATP-dependent autophosphorylation activity. The polypeptide is Nicotinamide phosphoribosyltransferase (Xanthomonas campestris pv. campestris (strain 8004)).